We begin with the raw amino-acid sequence, 205 residues long: Large ribosomal subunit protein uL3 (205 aa).

This sequence belongs to the universal ribosomal protein uL3 family. In terms of assembly, part of the 50S ribosomal subunit. Forms a cluster with proteins L14 and L19.

Its function is as follows. One of the primary rRNA binding proteins, it binds directly near the 3'-end of the 23S rRNA, where it nucleates assembly of the 50S subunit. The polypeptide is Large ribosomal subunit protein uL3 (Flavobacterium johnsoniae (strain ATCC 17061 / DSM 2064 / JCM 8514 / BCRC 14874 / CCUG 350202 / NBRC 14942 / NCIMB 11054 / UW101) (Cytophaga johnsonae)).